Reading from the N-terminus, the 563-residue chain is Methylcrotonoyl-CoA carboxylase beta chain, mitochondrial (563 aa).

The transit peptide at 1-22 (MWGALRSALRPCCRAAVPPQRA) directs the protein to the mitochondrion. A CoA carboxyltransferase N-terminal domain is found at 49-306 (MKALVSQLHE…QKKMDVTIEP (258 aa)). Positions 49–555 (MKALVSQLHE…SAALNAPIQR (507 aa)) are carboxyltransferase. Lysine 70 is subject to N6-acetyllysine; alternate. Position 70 is an N6-succinyllysine; alternate (lysine 70). Lysine 141 is modified (N6-succinyllysine). The 247-residue stretch at 309 to 555 (EPLFPADELY…SAALNAPIQR (247 aa)) folds into the CoA carboxyltransferase C-terminal domain. The tract at residues 343 to 372 (RFNEFKALYGDTLVTGFARIFGYPVGIIGN) is acyl-CoA binding. N6-succinyllysine is present on lysine 433. Lysine 495 carries the post-translational modification N6-acetyllysine; alternate. N6-succinyllysine; alternate is present on lysine 495. N6-acetyllysine is present on lysine 511.

It belongs to the AccD/PCCB family. As to quaternary structure, probably a dodecamer composed of six biotin-containing alpha subunits (MCCC1) and six beta (MCCC2) subunits.

The protein localises to the mitochondrion matrix. It carries out the reaction 3-methylbut-2-enoyl-CoA + hydrogencarbonate + ATP = 3-methyl-(2E)-glutaconyl-CoA + ADP + phosphate + H(+). Its pathway is amino-acid degradation; L-leucine degradation; (S)-3-hydroxy-3-methylglutaryl-CoA from 3-isovaleryl-CoA: step 2/3. Its function is as follows. Carboxyltransferase subunit of the 3-methylcrotonyl-CoA carboxylase, an enzyme that catalyzes the conversion of 3-methylcrotonyl-CoA to 3-methylglutaconyl-CoA, a critical step for leucine and isovaleric acid catabolism. This Mus musculus (Mouse) protein is Methylcrotonoyl-CoA carboxylase beta chain, mitochondrial (Mccc2).